Here is a 452-residue protein sequence, read N- to C-terminus: Probable alpha-galactosidase B (452 aa).

An N-terminal signal peptide occupies residues 1–24 (MLHRATTTAAAAAAAALLLCPVQA). Cysteine 47 and cysteine 79 are disulfide-bonded. Residues asparagine 87 and asparagine 138 are each glycosylated (N-linked (GlcNAc...) asparagine). A disulfide bridge links cysteine 129 with cysteine 159. Aspartate 157 (nucleophile) is an active-site residue. An N-linked (GlcNAc...) asparagine glycan is attached at asparagine 184. A substrate-binding site is contributed by 231-235 (DWGQA). The active-site Proton donor is aspartate 253. N-linked (GlcNAc...) asparagine glycosylation is found at asparagine 292, asparagine 391, asparagine 409, and asparagine 410.

The protein belongs to the glycosyl hydrolase 27 family.

The protein resides in the secreted. It catalyses the reaction Hydrolysis of terminal, non-reducing alpha-D-galactose residues in alpha-D-galactosides, including galactose oligosaccharides, galactomannans and galactolipids.. Functionally, hydrolyzes a variety of simple alpha-D-galactoside as well as more complex molecules such as oligosaccharides and polysaccharides. The polypeptide is Probable alpha-galactosidase B (Talaromyces emersonii (Thermophilic fungus)).